Here is a 30-residue protein sequence, read N- to C-terminus: NADH-ubiquinone oxidoreductase chain 5 (30 aa).

A helical membrane pass occupies residues 7-27 (NIIIIINSSLIIILFSSIFFF).

The protein belongs to the complex I subunit 5 family.

The protein localises to the mitochondrion inner membrane. The catalysed reaction is a ubiquinone + NADH + 5 H(+)(in) = a ubiquinol + NAD(+) + 4 H(+)(out). In terms of biological role, core subunit of the mitochondrial membrane respiratory chain NADH dehydrogenase (Complex I) that is believed to belong to the minimal assembly required for catalysis. Complex I functions in the transfer of electrons from NADH to the respiratory chain. The immediate electron acceptor for the enzyme is believed to be ubiquinone. The chain is NADH-ubiquinone oxidoreductase chain 5 (ND5) from Pisaster ochraceus (Ochre sea star).